Reading from the N-terminus, the 355-residue chain is MTAAPLTPDPTHPRRRRKSYTFFSLGIYAEALLFLLSSLSDACEPPPPFEAMELKDKPKPHYAIGEIIEYTCKKGYLYLSPYPMTAICQPNHTWVPISDHGCIKVQCTMLQDPSFGKVHYIDGRFSWGARVKYTCMNGYYMVGMSVLQCELNGNGDAFWNGHPPSCKKVYCLPPPKIKNGTHTFTDIKVFKYHEAVIYSCDPNPGPDKFSLVGPSMLFCAGHNTWSSDPPECKVVKCPFPVLQNGRQISRTEKKFSYQALVLFQCLEGFYMEGSSMVVCGAKSSWEPSIPQCLKGPKPHSTKPPVYSESGYPSPREGIFGQEFDAWIIALIVVTSVVGVIVICLIILRCSEYRKK.

An N-terminal signal peptide occupies residues 1 to 42; that stretch reads MTAAPLTPDPTHPRRRRKSYTFFSLGIYAEALLFLLSSLSDA. 4 consecutive Sushi domains span residues 43-104, 105-168, 169-234, and 235-294; these read CEPP…GCIK, VQCT…SCKK, VYCL…ECKV, and VKCP…QCLK. Topologically, residues 43–326 are extracellular; that stretch reads CEPPPPFEAM…GIFGQEFDAW (284 aa). Intrachain disulfides connect Cys107–Cys149, Cys135–Cys166, Cys171–Cys219, Cys200–Cys232, Cys237–Cys279, and Cys265–Cys292. Asn179 carries an N-linked (GlcNAc...) asparagine glycan. Residue Thr301 is glycosylated (O-linked (GalNAc...) threonine). Residues 327-347 traverse the membrane as a helical segment; that stretch reads IIALIVVTSVVGVIVICLIIL. At 348–355 the chain is on the cytoplasmic side; it reads RCSEYRKK.

In terms of assembly, interacts with C3b. Interacts with C4b. Interacts with moesin/MSN. O-glycosylated. Post-translationally, N-glycosylated. In terms of tissue distribution, specifically expressed in testis. Within testis, present only in elongated spermatids and spermatozoa (at protein level).

It is found in the cytoplasmic vesicle. It localises to the secretory vesicle. Its subcellular location is the acrosome inner membrane. May be involved in the fusion of the spermatozoa with the oocyte during fertilization. The sequence is that of Membrane cofactor protein (Cd46) from Rattus norvegicus (Rat).